Reading from the N-terminus, the 204-residue chain is Guanylate kinase (204 aa).

The Guanylate kinase-like domain maps to 5-184 (GLLIVLSGPS…AVQRIKDIIA (180 aa)). 12–19 (GPSGVGKG) provides a ligand contact to ATP.

This sequence belongs to the guanylate kinase family.

It localises to the cytoplasm. It carries out the reaction GMP + ATP = GDP + ADP. Its function is as follows. Essential for recycling GMP and indirectly, cGMP. The chain is Guanylate kinase from Enterococcus faecalis (strain ATCC 700802 / V583).